A 380-amino-acid polypeptide reads, in one-letter code: 3-dehydroquinate synthase (380 aa).

The protein belongs to the archaeal-type DHQ synthase family.

It carries out the reaction 2-amino-2,3,7-trideoxy-D-lyxo-hept-6-ulosonate + NAD(+) + H2O = 3-dehydroquinate + NH4(+) + NADH + H(+). Functionally, catalyzes the oxidative deamination and cyclization of 2-amino-3,7-dideoxy-D-threo-hept-6-ulosonic acid (ADH) to yield 3-dehydroquinate (DHQ), which is fed into the canonical shikimic pathway of aromatic amino acid biosynthesis. In Methanosarcina barkeri (strain Fusaro / DSM 804), this protein is 3-dehydroquinate synthase.